Reading from the N-terminus, the 333-residue chain is MRVKMFKPLRLVLLIAVSVLLMAARMPNMRVVPWQQVEVPTQNILLDIAFTGTTPSHGWLVGDKATLLESRDGGLHWQVRELPGLEPEAYLASISFAGAEGWVAGQPKILLHTLNEGSDWTSIRLNNQLPGEPLLIQALGPGAAEMVTNVGAIYRTEDGGQTWHAQVDEPIGAIKNIARGPEGEYLAVSSRGSFYFLYTPESRTWKPYPRESSRRIQNMGFGPHGSAWKLNQGAEIAFTDDFTSGQWSSPLRPGRALSFGYLNAAYQNDHDLWVVGGGATLIHSPDGGKTWEQAKKLSNIPANFYSIEFFGPEQGFILGQRGTLLRYVSSNNS.

The first 25 residues, 1–25 (MRVKMFKPLRLVLLIAVSVLLMAAR), serve as a signal peptide directing secretion.

Belongs to the Ycf48 family. In terms of assembly, part of early PSII assembly complexes which includes D1 (psbA) and PsbI; not found in mature PSII. Binds to the lumenal side of PSII complexes. Interacts with YidC.

Its subcellular location is the cellular thylakoid lumen. Functionally, a factor required for optimal assembly of photosystem II (PSII), acting in the early stages of PSII assembly. Also plays a role in replacement of photodamaged D1 (psbA). Assists YidC in synthesis of chlorophyll-binding proteins. The sequence is that of Photosystem II assembly protein Ycf48 from Synechococcus sp. (strain JA-2-3B'a(2-13)) (Cyanobacteria bacterium Yellowstone B-Prime).